The chain runs to 64 residues: Carnocyclin-A (64 aa).

A propeptide spanning residues 1 to 4 (MLYE) is cleaved from the precursor. Positions 5–64 (LVAYGIAQGTAEKVVSLINAGLTVGSIISILGGVTVGLSGVFTAVKAAIAKQGIKKAIQL) form a cross-link, cyclopeptide (Leu-Leu).

The protein resides in the secreted. In terms of biological role, cyclopeptide antibiotic that inhibits the growth of Gram-positive bacteria, but has no effect on the growth of Gram-negative bacteria. This chain is Carnocyclin-A, found in Carnobacterium maltaromaticum (Carnobacterium piscicola).